Consider the following 439-residue polypeptide: Histidine--tRNA ligase (439 aa).

It belongs to the class-II aminoacyl-tRNA synthetase family. Homodimer.

It localises to the cytoplasm. It carries out the reaction tRNA(His) + L-histidine + ATP = L-histidyl-tRNA(His) + AMP + diphosphate + H(+). This chain is Histidine--tRNA ligase, found in Leptospira borgpetersenii serovar Hardjo-bovis (strain L550).